The following is a 483-amino-acid chain: Regulatory protein ViaA (483 aa).

It belongs to the ViaA family. Homodimer. Interacts with RavA.

It localises to the cytoplasm. In terms of biological role, component of the RavA-ViaA chaperone complex, which may act on the membrane to optimize the function of some of the respiratory chains. ViaA stimulates the ATPase activity of RavA. In Escherichia coli O7:K1 (strain IAI39 / ExPEC), this protein is Regulatory protein ViaA.